Consider the following 216-residue polypeptide: Soluble inorganic pyrophosphatase 3 (216 aa).

A compositionally biased stretch (acidic residues) spans 1–10 (MSEEAYEETQ). The interval 1–21 (MSEEAYEETQESSQSPRPVPK) is disordered. Lys-66 and Arg-80 together coordinate substrate. Tyr-88 (proton donor) is an active-site residue. Tyr-92 serves as a coordination point for substrate. The Mg(2+) site is built by Asp-102, Asp-107, and Asp-139. Tyr-176 is a binding site for substrate.

Belongs to the PPase family. Mg(2+) is required as a cofactor. In terms of tissue distribution, expressed preferentially in stamen, pollen and flower, and at a low level in lateral roots and root elongation zones.

Its subcellular location is the cytoplasm. The catalysed reaction is diphosphate + H2O = 2 phosphate + H(+). This is Soluble inorganic pyrophosphatase 3 from Arabidopsis thaliana (Mouse-ear cress).